A 496-amino-acid polypeptide reads, in one-letter code: Tripartite motif-containing protein 30A (496 aa).

Residues 15–59 form an RING-type zinc finger; it reads CPICLELLKEPVSADCNHSFCRACITLNYESNRNTDGKGNCPVCR. The B box-type zinc finger occupies 91-132; that stretch reads QKVNICAQHGEKLRLFCRKDMMVICWLCERSQEHRGHQTALI. Cys96, His99, Cys118, and His124 together coordinate Zn(2+). Residues 173–239 are a coiled coil; the sequence is NQIQINVENV…RDLISDVEHH (67 aa). A highly hydrophilic region spans residues 205-210; it reads KKEKKE. The Nuclear localization signal motif lies at 268–276; the sequence is TVPQKRKRT. The region spanning 281–496 is the B30.2/SPRY domain; sequence DLKGMLQVYQ…EPMTICGPPS (216 aa).

In terms of assembly, homomultimer. Interacts with NR2C2/TAK1, TAB2 and TAB3. Does not interact with NLRP3, NLRC4 or TAB1. In terms of tissue distribution, highly expressed in spleen and lymph nodes (at protein level).

The protein resides in the cytoplasm. It localises to the nucleus. Trans-acting factor that regulates gene expression of interleukin 2 receptor alpha chain. May affect IL2R-alpha expression through cis-acting negative regulatory elements or through competition with proteins that bind to enhancer or activator sequences. Negatively regulates Toll-like receptor (TLR)-mediated activation of NFKB by promoting degradation of TAB2 and TAB3 and preventing TRAF6 autoubiquitination. Negatively regulates production of reactive oxygen species (ROS) which inhibits activation of the NLRP3 inflammasome complex. This, in turn, regulates activation of CASP1 and subsequent cleavage of IL1B and IL18. No activity detected against a range of retroviruses including a number of lentiviruses, gammaretroviruses and betaretroviruses. The chain is Tripartite motif-containing protein 30A (Trim30a) from Mus musculus (Mouse).